Consider the following 541-residue polypeptide: Chaperonin GroEL 2 (541 aa).

Residues 30–33 (TLGP), lysine 51, 87–91 (DGTTT), glycine 414, and aspartate 495 contribute to the ATP site.

Belongs to the chaperonin (HSP60) family. In terms of assembly, forms a cylinder of 14 subunits composed of two heptameric rings stacked back-to-back. Interacts with the co-chaperonin GroES.

The protein localises to the cytoplasm. It catalyses the reaction ATP + H2O + a folded polypeptide = ADP + phosphate + an unfolded polypeptide.. Together with its co-chaperonin GroES, plays an essential role in assisting protein folding. The GroEL-GroES system forms a nano-cage that allows encapsulation of the non-native substrate proteins and provides a physical environment optimized to promote and accelerate protein folding. This Cereibacter sphaeroides (Rhodobacter sphaeroides) protein is Chaperonin GroEL 2.